The following is a 416-amino-acid chain: Chaperone protein dnaJ A6 (416 aa).

The region spanning 12–73 is the J domain; sequence KYYEVLGVPK…EKRDIYDQYG (62 aa). Residues 133–217 form a CR-type zinc finger; it reads GSMKKLSLSR…CRASKVIQEK (85 aa). Residues C146, C149, C162, C165, C189, C192, C205, and C208 each contribute to the Zn(2+) site. 3 CXXCXGXG motif repeats span residues 146–153, 162–169, and 189–196; these read CPKCKGKG, CYGCHGVG, and CPECRGSG. Residues 380–399 show a composition bias toward basic and acidic residues; sequence HDVNIEEEMRRKQYQRKQEA. A disordered region spans residues 380 to 416; sequence HDVNIEEEMRRKQYQRKQEAYDEDEEEDAPRVQCAQQ.

The protein belongs to the DnaJ family. In terms of assembly, interacts with ZFP1.

It is found in the nucleus. The protein resides in the cytoplasm. Involved in disease resistance. Acts as a negative regulator of innate immunity to the rice blast fungus (Magnaporthe oryzae). Acts as a negative regulator of the pathogen-associated molecular pattern (PAMP)-triggered immunity (PTI) response through the inhibition of reactive oxygen species (ROS) accumulation and expression of defense-related genes. May function via the ubiquitin-proteasome degradation pathway. The sequence is that of Chaperone protein dnaJ A6 from Oryza sativa subsp. japonica (Rice).